A 451-amino-acid chain; its full sequence is MKNKPLAFQIWVVISGILLAISILLLVLFSNTLRDFFTNETYTTIENEQHVLTEYRLPGSIERRYYSEEATAPTTVRSVQHVLLPENEEASSDKDLSILSSSFIHKVYKLADKQEAKKKRYSADVNGEKVFFVIKKGLSVNGQSAMMLSYALDSYRDDLAYTLFKQLLFIIAVVILLSWIPAIWLAKYLSRPLVSFEKHVKRISEQDWDDPVKVDRKDEIGKLGHTIEEMRQKLVQKDETERTLLQNISHDLKTPVMVIRGYTQSIKDGIFPKGDLENTVDVIECEALKLEKKIKDLLYLTKLDYLAKQKVQHDMFSIVEVTEEVIERLKWARKELSWEIDVEEDILMPGDPEQWNKLLENILENQIRYAETKIEISMKQDDRNIVITIKNDGPHIEDEMLSSLYEPFNKGKKGEFGIGLSIVKRILTLHKASISIENDKTGVTYRIAVPK.

Topologically, residues 1–9 (MKNKPLAFQ) are cytoplasmic. A helical membrane pass occupies residues 10-30 (IWVVISGILLAISILLLVLFS). Residues 31 to 165 (NTLRDFFTNE…RDDLAYTLFK (135 aa)) lie on the Extracellular side of the membrane. The chain crosses the membrane as a helical span at residues 166 to 186 (QLLFIIAVVILLSWIPAIWLA). An HAMP domain is found at 187–239 (KYLSRPLVSFEKHVKRISEQDWDDPVKVDRKDEIGKLGHTIEEMRQKLVQKDE). The Cytoplasmic portion of the chain corresponds to 187-451 (KYLSRPLVSF…GVTYRIAVPK (265 aa)). The region spanning 247–451 (NISHDLKTPV…GVTYRIAVPK (205 aa)) is the Histidine kinase domain. His-250 carries the phosphohistidine; by autocatalysis modification.

It is found in the cell membrane. It carries out the reaction ATP + protein L-histidine = ADP + protein N-phospho-L-histidine.. Functionally, member of the two-component regulatory system CssS/CssR required to control the cellular response to secretion stress. Required for the transcription of htrA. Could detect misfolded proteins at the membrane-cell wall interface and then activate CssR by phosphorylation. This is Sensor histidine kinase CssS (cssS) from Bacillus subtilis (strain 168).